A 339-amino-acid chain; its full sequence is NADH-quinone oxidoreductase subunit H (339 aa).

9 helical membrane-spanning segments follow: residues 9 to 29 (IFPL…LILC), 50 to 70 (PNVV…KLLF), 82 to 102 (ILFI…WAVI), 115 to 135 (VGVL…IIAG), 161 to 181 (MGLV…SGII), 187 to 207 (MPWW…ISVL), 235 to 255 (MGFA…SAMT), 275 to 295 (IPGF…FLWI), and 311 to 331 (GWKV…SVLV).

It belongs to the complex I subunit 1 family. In terms of assembly, NDH-1 is composed of 14 different subunits. Subunits NuoA, H, J, K, L, M, N constitute the membrane sector of the complex.

It is found in the cell inner membrane. It carries out the reaction a quinone + NADH + 5 H(+)(in) = a quinol + NAD(+) + 4 H(+)(out). NDH-1 shuttles electrons from NADH, via FMN and iron-sulfur (Fe-S) centers, to quinones in the respiratory chain. The immediate electron acceptor for the enzyme in this species is believed to be ubiquinone. Couples the redox reaction to proton translocation (for every two electrons transferred, four hydrogen ions are translocated across the cytoplasmic membrane), and thus conserves the redox energy in a proton gradient. This subunit may bind ubiquinone. The sequence is that of NADH-quinone oxidoreductase subunit H from Rickettsia felis (strain ATCC VR-1525 / URRWXCal2) (Rickettsia azadi).